Here is a 235-residue protein sequence, read N- to C-terminus: Phosphoribosylaminoimidazole-succinocarboxamide synthase (235 aa).

Belongs to the SAICAR synthetase family.

It catalyses the reaction 5-amino-1-(5-phospho-D-ribosyl)imidazole-4-carboxylate + L-aspartate + ATP = (2S)-2-[5-amino-1-(5-phospho-beta-D-ribosyl)imidazole-4-carboxamido]succinate + ADP + phosphate + 2 H(+). It functions in the pathway purine metabolism; IMP biosynthesis via de novo pathway; 5-amino-1-(5-phospho-D-ribosyl)imidazole-4-carboxamide from 5-amino-1-(5-phospho-D-ribosyl)imidazole-4-carboxylate: step 1/2. The protein is Phosphoribosylaminoimidazole-succinocarboxamide synthase of Streptococcus pneumoniae (strain JJA).